A 384-amino-acid chain; its full sequence is Mannitol-1-phosphate 5-dehydrogenase (384 aa).

4-15 (AVHFGAGNIGRG) serves as a coordination point for NAD(+).

It belongs to the mannitol dehydrogenase family.

The catalysed reaction is D-mannitol 1-phosphate + NAD(+) = beta-D-fructose 6-phosphate + NADH + H(+). In Lacticaseibacillus paracasei (strain ATCC 334 / BCRC 17002 / CCUG 31169 / CIP 107868 / KCTC 3260 / NRRL B-441) (Lactobacillus paracasei), this protein is Mannitol-1-phosphate 5-dehydrogenase.